We begin with the raw amino-acid sequence, 278 residues long: HTH-type transcriptional activator RhaS (278 aa).

In terms of domain architecture, HTH araC/xylS-type spans 174 to 272 (NQLLAWLEDH…DWSPRDIRQG (99 aa)). 2 consecutive DNA-binding regions (H-T-H motif) follow at residues 191–212 (EEVAAQFSLSLRTLHRQLKQQT) and 239–262 (VTDIAFRCGFGDSNHFSTLFRREF).

Binds DNA as a dimer.

It is found in the cytoplasm. Activates expression of the rhaBAD and rhaT operons. This Klebsiella pneumoniae (strain 342) protein is HTH-type transcriptional activator RhaS.